We begin with the raw amino-acid sequence, 139 residues long: Small ribosomal subunit protein uS12m (139 aa).

A mitochondrion-targeting transit peptide spans 1–29; the sequence is MSWPGLLYGLTTSLSRGLALAPQLWAARS.

Belongs to the universal ribosomal protein uS12 family. Component of the mitochondrial ribosome small subunit (28S) which comprises a 12S rRNA and about 30 distinct proteins.

The protein resides in the mitochondrion. The chain is Small ribosomal subunit protein uS12m (Mrps12) from Mus musculus (Mouse).